We begin with the raw amino-acid sequence, 206 residues long: A-type ATP synthase subunit E (206 aa).

It belongs to the V-ATPase E subunit family. Has multiple subunits with at least A(3), B(3), C, D, E, F, H, I and proteolipid K(x).

The protein resides in the cell membrane. Its function is as follows. Component of the A-type ATP synthase that produces ATP from ADP in the presence of a proton gradient across the membrane. This Methanothermobacter thermautotrophicus (strain ATCC 29096 / DSM 1053 / JCM 10044 / NBRC 100330 / Delta H) (Methanobacterium thermoautotrophicum) protein is A-type ATP synthase subunit E.